The following is a 578-amino-acid chain: Transmembrane protein 121B (578 aa).

Disordered regions lie at residues 1 to 84 (MRPA…ESLS) and 106 to 129 (AGPA…PTSS). Low complexity-rich tracts occupy residues 8 to 17 (PRSVSSASGS) and 44 to 53 (GDSSTSTSTS). Over residues 54–67 (RGGGGGRRGGGGGS) the composition is skewed to gly residues. Position 167 is a phosphoserine (Ser-167). Residues 529–557 (RARGGYGAPPSAPPPPPPPPQGGSQLGHC) form a disordered region. The segment covering 538 to 549 (PSAPPPPPPPPQ) has biased composition (pro residues). At Ser-552 the chain carries Phosphoserine.

The protein belongs to the TMEM121 family. Widely expressed, especially in adult heart, brain, prostate, testes, peripherical blood leukocytes and fetal brain.

This is Transmembrane protein 121B from Homo sapiens (Human).